The primary structure comprises 429 residues: Dihydroorotase (429 aa).

Zn(2+) is bound by residues histidine 59 and histidine 61. Substrate contacts are provided by residues 61 to 63 and asparagine 93; that span reads HLR. Zn(2+) is bound by residues lysine 143, histidine 171, histidine 229, and aspartate 298. At lysine 143 the chain carries N6-carboxylysine. Aspartate 298 is an active-site residue. Substrate contacts are provided by residues histidine 302 and 316–317; that span reads AG.

It belongs to the metallo-dependent hydrolases superfamily. DHOase family. Class I DHOase subfamily. Zn(2+) is required as a cofactor.

The enzyme catalyses (S)-dihydroorotate + H2O = N-carbamoyl-L-aspartate + H(+). It participates in pyrimidine metabolism; UMP biosynthesis via de novo pathway; (S)-dihydroorotate from bicarbonate: step 3/3. Its function is as follows. Catalyzes the reversible cyclization of carbamoyl aspartate to dihydroorotate. This chain is Dihydroorotase, found in Methanosphaera stadtmanae (strain ATCC 43021 / DSM 3091 / JCM 11832 / MCB-3).